We begin with the raw amino-acid sequence, 460 residues long: Flavonol 3-O-glucosyltransferase (460 aa).

The active-site Proton acceptor is His-23. An anthocyanidin contacts are provided by His-23 and Gln-88. Asp-123 (charge relay) is an active-site residue. Residue Thr-145 coordinates UDP-alpha-D-glucose. His-154 is a binding site for an anthocyanidin. UDP-alpha-D-glucose is bound by residues Ala-339, Gln-341, His-356, Trp-359, Asn-360, Ser-361, and Glu-364. An an anthocyanidin-binding site is contributed by Gly-379. Positions 380 and 381 each coordinate UDP-alpha-D-glucose.

This sequence belongs to the UDP-glycosyltransferase family.

The catalysed reaction is a flavonol + UDP-alpha-D-glucose = a flavonol 3-O-beta-D-glucoside + UDP + H(+). The enzyme catalyses quercetin + UDP-alpha-D-glucose = quercetin 3-O-beta-D-glucoside + UDP + H(+). It functions in the pathway flavonoid metabolism. Functionally, flavonol 3-O-glucosyltransferase that catalyzes the transfer of glucose from UDP-glucose to the 3-OH position of quercetin and kaempferol. Possesses high quercetin 3-O-glucosyltransferase activity in vitro. Catalyzes the glycosylation of anthocyanins from UDP-glucose. Also active in vitro on benzoates and benzoate derivatives. This chain is Flavonol 3-O-glucosyltransferase, found in Arabidopsis thaliana (Mouse-ear cress).